The sequence spans 248 residues: MSVTMREMLEAGVHFGHQTRFWNPKMAPYIFGHRNRIHIVNLEKTLGMYQEAMKYIKQLSSNRGTVLFVGTKRQARETIAAEAARAGMPYVDQRWLGGMLTNFKTIKTSIKRLKELEALVEDGSMEKLSKKEALMFEREKIKLEKSIGGIKDMGGIPDAIFVVDVGYHKGAITEAAKLGIPVIGVVDTNHSPEGVAYIIPGNDDSSKAIMLYARGVADAILEGRASATNDLVESIKGGDDFVEVNEQA.

It belongs to the universal ribosomal protein uS2 family.

This Herminiimonas arsenicoxydans protein is Small ribosomal subunit protein uS2.